An 875-amino-acid chain; its full sequence is Alanine--tRNA ligase (875 aa).

Residues His561, His565, Cys663, and His667 each contribute to the Zn(2+) site.

The protein belongs to the class-II aminoacyl-tRNA synthetase family. Zn(2+) is required as a cofactor.

The protein localises to the cytoplasm. It carries out the reaction tRNA(Ala) + L-alanine + ATP = L-alanyl-tRNA(Ala) + AMP + diphosphate. Catalyzes the attachment of alanine to tRNA(Ala) in a two-step reaction: alanine is first activated by ATP to form Ala-AMP and then transferred to the acceptor end of tRNA(Ala). Also edits incorrectly charged Ser-tRNA(Ala) and Gly-tRNA(Ala) via its editing domain. This is Alanine--tRNA ligase from Chlamydia trachomatis serovar L2 (strain ATCC VR-902B / DSM 19102 / 434/Bu).